The chain runs to 790 residues: Phenylalanine--tRNA ligase beta subunit (790 aa).

A tRNA-binding domain is found at 39 to 154 (PDSLNTVVTG…ADTPLGESAC (116 aa)). In terms of domain architecture, B5 spans 404–483 (FSPLSLSVRP…FVQKTQKILP (80 aa)). Mg(2+) is bound by residues aspartate 457, aspartate 463, glutamate 466, and glutamate 467. The region spanning 694–790 (PIYPASSRDI…KLANIGQGNS (97 aa)) is the FDX-ACB domain.

The protein belongs to the phenylalanyl-tRNA synthetase beta subunit family. Type 1 subfamily. Tetramer of two alpha and two beta subunits. Mg(2+) serves as cofactor.

Its subcellular location is the cytoplasm. It catalyses the reaction tRNA(Phe) + L-phenylalanine + ATP = L-phenylalanyl-tRNA(Phe) + AMP + diphosphate + H(+). This Chlamydia trachomatis serovar D (strain ATCC VR-885 / DSM 19411 / UW-3/Cx) protein is Phenylalanine--tRNA ligase beta subunit (pheT).